Here is a 138-residue protein sequence, read N- to C-terminus: Protein FAM136A (138 aa).

It belongs to the FAM136 family.

This Xenopus tropicalis (Western clawed frog) protein is Protein FAM136A (fam136a).